The following is a 214-amino-acid chain: Adenylate kinase (214 aa).

10 to 15 (GAGKGT) serves as a coordination point for ATP. An NMP region spans residues 30–59 (STGDMLRAAVKAGSELGKQAKAIMDAGKLV). Residues threonine 31, arginine 36, 57 to 59 (KLV), 85 to 88 (GFPR), and glutamine 92 each bind AMP. Residues 122-159 (GRRVHPGSGRVYHVKFNPPQVEGKDDVTGEDLMTRKDD) form an LID region. ATP is bound by residues arginine 123 and 132–133 (VY). The AMP site is built by arginine 156 and arginine 167. Glutamine 200 is an ATP binding site.

The protein belongs to the adenylate kinase family. In terms of assembly, monomer.

The protein localises to the cytoplasm. It carries out the reaction AMP + ATP = 2 ADP. The protein operates within purine metabolism; AMP biosynthesis via salvage pathway; AMP from ADP: step 1/1. In terms of biological role, catalyzes the reversible transfer of the terminal phosphate group between ATP and AMP. Plays an important role in cellular energy homeostasis and in adenine nucleotide metabolism. This Edwardsiella ictaluri (strain 93-146) protein is Adenylate kinase.